The chain runs to 288 residues: 3'-5' exonuclease (288 aa).

The segment at 30-67 is disordered; that stretch reads RSSSSSSSAAPTVQATTSVHGHEEDPNQIPNNIRRQLP. Polar residues-rich tracts occupy residues 38–48 and 57–67; these read AAPTVQATTSV and QIPNNIRRQLP. Positions 129 to 279 constitute a 3'-5' exonuclease domain; that stretch reads FVGLDIEWRP…ASWHLYKVLK (151 aa).

In terms of assembly, interacts with KU70 and KU80. Interacts with RECQL2. Mg(2+) is required as a cofactor. The cofactor is Mn(2+). Expressed ubiquitously.

Its subcellular location is the nucleus. Its activity is regulated as follows. Activated upon interaction with the KU heterodimer. Not stimulated by ATP. In terms of biological role, exonuclease that digests recessed strands of DNA duplexes in the 3' to 5' direction but hardly single-stranded DNA or blunt-ended duplexes. Also able to digest 3'-protruding strands and 3'-recessed strand termini of duplexes containing mismatched bases. This is 3'-5' exonuclease (WEX) from Arabidopsis thaliana (Mouse-ear cress).